A 316-amino-acid chain; its full sequence is Sideroflexin-4 (316 aa).

5 consecutive transmembrane segments (helical) span residues 83–103, 141–161, 174–194, 230–250, and 263–283; these read QVFL…HKGI, LLIL…QIIL, ICRS…NILV, ISRA…MALL, and IAPI…PVSF.

This sequence belongs to the sideroflexin family.

Its subcellular location is the mitochondrion inner membrane. Functionally, mitochondrial amino-acid transporter. Does not act as a serine transporter: not able to mediate transport of serine into mitochondria. This is Sideroflexin-4 from Danio rerio (Zebrafish).